The sequence spans 201 residues: Acyl-homoserine-lactone synthase (201 aa).

Belongs to the autoinducer synthase family.

The catalysed reaction is a fatty acyl-[ACP] + S-adenosyl-L-methionine = an N-acyl-L-homoserine lactone + S-methyl-5'-thioadenosine + holo-[ACP] + H(+). In terms of biological role, required for the synthesis of PAI consisting of 3-oxo-N-(tetrahydro-2-oxo-3-furanyl)-dodecanamide also known as N-(3-oxododecanoyl)homoserine lactone, an autoinducer molecule which binds to LasR and thus acts in elastase biosynthesis regulation. In Pseudomonas aeruginosa (strain ATCC 15692 / DSM 22644 / CIP 104116 / JCM 14847 / LMG 12228 / 1C / PRS 101 / PAO1), this protein is Acyl-homoserine-lactone synthase (lasI).